The sequence spans 1117 residues: Protein cup (1117 aa).

Residues 1 to 106 are disordered; the sequence is MQMAEAEQEN…PPPPPPLPTS (106 aa). Composition is skewed to pro residues over residues 54–64 and 95–104; these read YPPPPPPPTPV and CAPPPPPPLP. Ser-263 and Ser-270 each carry phosphoserine. The disordered stretch occupies residues 270-326; sequence SPRKQVASKEAVPEQQSSQVQQKRPPSTGIHKPGSLRAPKAVRPTTAPVVSSKPVKS. Positions 283–294 are enriched in polar residues; it reads EQQSSQVQQKRP. A YXXXXLphi motif 1 motif is present at residues 327–333; sequence YTRSRLM. Phosphoserine is present on residues Ser-347 and Ser-350. Positions 363–369 match the YXXXXLphi motif 2 motif; sequence ELEGRLR. Disordered stretches follow at residues 493–528, 596–618, 654–673, 679–728, 984–1004, and 1016–1051; these read ISSQ…EDLS, KEGN…KMDH, TEHQ…SFQF, SQQN…SSSS, GAKH…QARP, and ISGG…FQSF. Residue Thr-503 is modified to Phosphothreonine. A phosphoserine mark is found at Ser-509, Ser-513, Ser-520, Ser-523, and Ser-524. Composition is skewed to low complexity over residues 679 to 712 and 988 to 1001; these read SQQN…NTNN and QAQQ…QQRQ.

The protein belongs to the 4E-T/EIF4E-T family. As to quaternary structure, component of the osk RNP complex, which is composed of at least exu, yps, aret/bruno, cup, and the mRNA of osk. Interacts with the decapping activators me31B and tral. Component of the nanos RNP complex, which is composed of at least smg, cup, tral, me31B, the CCR4-NOT complex members Rga/NOT2 and Caf1, and the mRNA of nanos (nos). Interacts with btz. Recruited to the 3'-UTR of nos and osk mRNAs by smg and btz, respectively. Forms a ribonucleoprotein complex (RNP) containing at least me31B, eIF4E1, cup, tral and pAbp; this interaction is required for the translational silencing of maternal mRNAs during the maternal-to-zygotic transition. No interaction was detected with pAbp in 1-5 hour embryos. Interacts with osk and vas. Interacts with Pop2, twin/CCR4, Rga, Not3 and Not1 which are all core components of the CCR4-NOT deadenylase complex; interaction with the complex is required for cup deadenylation activity. Interacts with nanos. Interacts with smg. Interacts (via YXXXXLphi motifs) with eIF4E1; the interaction promotes retention of cup in the cytoplasm. Interacts with orb; the interaction represses the orb positive autoregulatory loop. Interacts with Nup154. As to expression, predominantly expressed in ovaries and in 0-2 hours old embryos. Weakly expressed in testis. Expressed in young embryos through stage 9, then it decreases throughout the rest of embryogenesis. In ovaries, it is expressed in germ cells throughout pre-vitellogenic development, but is not expressed in the somatic follicle cells. In germarial cysts, the protein (and not the transcripts) is transported selectively into the oocyte.

It localises to the cytoplasm. Its subcellular location is the nucleus. The protein resides in the cytoplasmic ribonucleoprotein granule. Adapter protein that plays a central role in localization of transcripts in the oocyte and in young embryos. Maintains RNA targets in a repressed state by promoting their deadenylation and protects deadenylated mRNAs from further degradation. Binds to and recruits eIF-4E to the 3'-UTR of some mRNA targets which prevents interaction between eIF4E1 and eIF4G. This may contribute to translational repression but does not appear to be necessary for it to occur. Can promote translational repression independently of deadenylation and eIF4E1 binding. Required for correct localization of eIF4E1 in the developing oocyte. Required for translational repression of oskar (osk) mRNA. Also required for the translational repression of nanos (nos) mRNA. Promotes the accumulation of the germ plasm components osk, vas and stau at the posterior pole of the oocyte and is required for germ cell development. Represses orb positive autoregulatory activity which prevents premature activation of orb and ensures its accumulation specifically in the developing oocyte. In 0-1 hour embryos, forms a complex with me31B, cup, tral and pAbp which binds to various mRNAs including maternal mRNAs, and down-regulates their expression during the maternal-to-zygotic transition. The protein is Protein cup (cup) of Drosophila melanogaster (Fruit fly).